The following is a 201-amino-acid chain: Recombination protein RecR (201 aa).

The C4-type zinc-finger motif lies at 60-75; sequence CSCCGNVDTIDPCTVC. A Toprim domain is found at 83–178; sequence AVIIVVEDVA…RITRLAHGVP (96 aa).

It belongs to the RecR family.

In terms of biological role, may play a role in DNA repair. It seems to be involved in an RecBC-independent recombinational process of DNA repair. It may act with RecF and RecO. In Rhizobium meliloti (strain 1021) (Ensifer meliloti), this protein is Recombination protein RecR.